The following is a 261-amino-acid chain: Transmembrane and immunoglobulin domain-containing protein 1 (261 aa).

Positions 1–27 (MAQKTSGLIQRCRFLLLMILFLPHVMT) are cleaved as a signal peptide. The Ig-like C2-type 1 domain occupies 28–114 (SSVLSVNGKT…LQRNQSVSIS (87 aa)). Topologically, residues 28-219 (SSVLSVNGKT…IVKDKGSTVP (192 aa)) are extracellular. The cysteines at positions 54 and 103 are disulfide-linked. Residues N83, N108, N118, and N189 are each glycosylated (N-linked (GlcNAc...) asparagine). The Ig-like C2-type 2 domain maps to 122-208 (PPLLSGNDFQ…LIETKTKDFH (87 aa)). C143 and C194 are disulfide-bonded. Residues 220–240 (IEPIIAACVVVFLTLVFGVIA) traverse the membrane as a helical segment. Residues 241–261 (RRKRIMKLCRKDQGPQCRTAL) are Cytoplasmic-facing.

In terms of assembly, homodimer. Post-translationally, N-glycosylated.

It is found in the cell membrane. Its subcellular location is the cytoplasm. Its function is as follows. May control cell-cell adhesion, cell migration and proliferation, cell morphology, and protects renal epithelial cells from oxidative cell injury to promote cell survival. The sequence is that of Transmembrane and immunoglobulin domain-containing protein 1 from Bos taurus (Bovine).